The primary structure comprises 486 residues: Glutamyl-tRNA(Gln) amidotransferase subunit A (486 aa).

Catalysis depends on charge relay system residues lysine 76 and serine 151. The active-site Acyl-ester intermediate is serine 175.

Belongs to the amidase family. GatA subfamily. In terms of assembly, heterotrimer of A, B and C subunits.

It carries out the reaction L-glutamyl-tRNA(Gln) + L-glutamine + ATP + H2O = L-glutaminyl-tRNA(Gln) + L-glutamate + ADP + phosphate + H(+). Its function is as follows. Allows the formation of correctly charged Gln-tRNA(Gln) through the transamidation of misacylated Glu-tRNA(Gln) in organisms which lack glutaminyl-tRNA synthetase. The reaction takes place in the presence of glutamine and ATP through an activated gamma-phospho-Glu-tRNA(Gln). The chain is Glutamyl-tRNA(Gln) amidotransferase subunit A from Marinomonas sp. (strain MWYL1).